The sequence spans 347 residues: Holliday junction branch migration complex subunit RuvB (347 aa).

The interval 1–183 is large ATPase domain (RuvB-L); sequence MTPPSRIVTP…FGIPIRLNFY (183 aa). ATP-binding positions include Leu22, Arg23, Gly64, Lys67, Thr68, Thr69, 130–132, Arg173, Tyr183, and Arg220; that span reads EDF. Thr68 lines the Mg(2+) pocket. Residues 184–254 form a small ATPAse domain (RuvB-S) region; sequence TVEELEGIVS…IADHALSALE (71 aa). Positions 257–347 are head domain (RuvB-H); it reads AAGLDAMDRR…QFGLFGGDEE (91 aa). DNA is bound by residues Arg293, Arg312, and Arg317.

The protein belongs to the RuvB family. In terms of assembly, homohexamer. Forms an RuvA(8)-RuvB(12)-Holliday junction (HJ) complex. HJ DNA is sandwiched between 2 RuvA tetramers; dsDNA enters through RuvA and exits via RuvB. An RuvB hexamer assembles on each DNA strand where it exits the tetramer. Each RuvB hexamer is contacted by two RuvA subunits (via domain III) on 2 adjacent RuvB subunits; this complex drives branch migration. In the full resolvosome a probable DNA-RuvA(4)-RuvB(12)-RuvC(2) complex forms which resolves the HJ.

The protein localises to the cytoplasm. The enzyme catalyses ATP + H2O = ADP + phosphate + H(+). The RuvA-RuvB-RuvC complex processes Holliday junction (HJ) DNA during genetic recombination and DNA repair, while the RuvA-RuvB complex plays an important role in the rescue of blocked DNA replication forks via replication fork reversal (RFR). RuvA specifically binds to HJ cruciform DNA, conferring on it an open structure. The RuvB hexamer acts as an ATP-dependent pump, pulling dsDNA into and through the RuvAB complex. RuvB forms 2 homohexamers on either side of HJ DNA bound by 1 or 2 RuvA tetramers; 4 subunits per hexamer contact DNA at a time. Coordinated motions by a converter formed by DNA-disengaged RuvB subunits stimulates ATP hydrolysis and nucleotide exchange. Immobilization of the converter enables RuvB to convert the ATP-contained energy into a lever motion, pulling 2 nucleotides of DNA out of the RuvA tetramer per ATP hydrolyzed, thus driving DNA branch migration. The RuvB motors rotate together with the DNA substrate, which together with the progressing nucleotide cycle form the mechanistic basis for DNA recombination by continuous HJ branch migration. Branch migration allows RuvC to scan DNA until it finds its consensus sequence, where it cleaves and resolves cruciform DNA. This is Holliday junction branch migration complex subunit RuvB from Rhodopseudomonas palustris (strain BisA53).